Here is a 204-residue protein sequence, read N- to C-terminus: Probable molybdenum cofactor guanylyltransferase (204 aa).

GTP contacts are provided by residues 10-12 (LSG), Lys-22, Asp-75, and Asp-104. Asp-104 provides a ligand contact to Mg(2+).

This sequence belongs to the MobA family. Mg(2+) is required as a cofactor.

It localises to the cytoplasm. The catalysed reaction is Mo-molybdopterin + GTP + H(+) = Mo-molybdopterin guanine dinucleotide + diphosphate. Its function is as follows. Transfers a GMP moiety from GTP to Mo-molybdopterin (Mo-MPT) cofactor (Moco or molybdenum cofactor) to form Mo-molybdopterin guanine dinucleotide (Mo-MGD) cofactor. The chain is Probable molybdenum cofactor guanylyltransferase from Methanocaldococcus jannaschii (strain ATCC 43067 / DSM 2661 / JAL-1 / JCM 10045 / NBRC 100440) (Methanococcus jannaschii).